A 1314-amino-acid chain; its full sequence is E3 ubiquitin-protein ligase RNF123 (1314 aa).

Alanine 2 is subject to N-acetylalanine. A B30.2/SPRY domain is found at 74 to 254 (VDNEEEESQG…VAFNFGSRPL (181 aa)). Position 675 is a phosphoserine (serine 675). Arginine 683 carries the asymmetric dimethylarginine modification. The interaction with NFKB1 stretch occupies residues 968 to 974 (WILVRLW). Positions 1254, 1257, 1269, 1271, 1274, 1277, 1288, and 1291 each coordinate Zn(2+). The RING-type zinc finger occupies 1254–1292 (CPICYAHPISAVFQPCGHKSCKACINQHLMNNKDCFFCK).

In terms of assembly, component of the KPC complex composed of RNF123/KPC1 and UBAC1/KPC2. Interacts with UBAC1 and CDKN1B via its N-terminal domain. Interacts with RIGI (via N-terminus) and IFIH1 (via N-terminus). Ubiquitinated, leading to its degradation. Deubiquitinated by USP19, thereby stimulating CDKN1B ubiquitin-dependent degradation.

It localises to the cytoplasm. It catalyses the reaction S-ubiquitinyl-[E2 ubiquitin-conjugating enzyme]-L-cysteine + [acceptor protein]-L-lysine = [E2 ubiquitin-conjugating enzyme]-L-cysteine + N(6)-ubiquitinyl-[acceptor protein]-L-lysine.. Its pathway is protein modification; protein ubiquitination. In terms of biological role, catalytic subunit of the KPC complex that acts as E3 ubiquitin-protein ligase. Promotes the ubiquitination and proteasome-mediated degradation of CDKN1B which is the cyclin-dependent kinase inhibitor at the G0-G1 transition of the cell cycle. Also acts as a key regulator of the NF-kappa-B signaling by promoting maturation of the NFKB1 component of NF-kappa-B: acts by catalyzing ubiquitination of the NFKB1 p105 precursor, leading to limited proteasomal degradation of NFKB1 p105 and generation of the active NFKB1 p50 subunit. Also functions as an inhibitor of innate antiviral signaling mediated by RIGI and IFIH1 independently of its E3 ligase activity. Interacts with the N-terminal CARD domains of RIGI and IFIH1 and competes with the downstream adapter MAVS. This is E3 ubiquitin-protein ligase RNF123 from Homo sapiens (Human).